The following is a 203-amino-acid chain: 3-isopropylmalate dehydratase small subunit (203 aa).

It belongs to the LeuD family. LeuD type 1 subfamily. In terms of assembly, heterodimer of LeuC and LeuD.

The enzyme catalyses (2R,3S)-3-isopropylmalate = (2S)-2-isopropylmalate. It functions in the pathway amino-acid biosynthesis; L-leucine biosynthesis; L-leucine from 3-methyl-2-oxobutanoate: step 2/4. In terms of biological role, catalyzes the isomerization between 2-isopropylmalate and 3-isopropylmalate, via the formation of 2-isopropylmaleate. The polypeptide is 3-isopropylmalate dehydratase small subunit (Rhodospirillum centenum (strain ATCC 51521 / SW)).